A 169-amino-acid polypeptide reads, in one-letter code: Large ribosomal subunit protein uL10 (169 aa).

This sequence belongs to the universal ribosomal protein uL10 family. As to quaternary structure, part of the ribosomal stalk of the 50S ribosomal subunit. The N-terminus interacts with L11 and the large rRNA to form the base of the stalk. The C-terminus forms an elongated spine to which L12 dimers bind in a sequential fashion forming a multimeric L10(L12)X complex.

Its function is as follows. Forms part of the ribosomal stalk, playing a central role in the interaction of the ribosome with GTP-bound translation factors. The chain is Large ribosomal subunit protein uL10 from Lactobacillus delbrueckii subsp. bulgaricus (strain ATCC 11842 / DSM 20081 / BCRC 10696 / JCM 1002 / NBRC 13953 / NCIMB 11778 / NCTC 12712 / WDCM 00102 / Lb 14).